We begin with the raw amino-acid sequence, 212 residues long: Prolactin (212 aa).

The signal sequence occupies residues M1–G26. Disulfide bonds link C71–C185 and C202–C212.

This sequence belongs to the somatotropin/prolactin family. As to expression, pituitary gland.

It localises to the secreted. This chain is Prolactin (prl), found in Ictalurus punctatus (Channel catfish).